The primary structure comprises 184 residues: Holliday junction branch migration complex subunit RuvA (184 aa).

The tract at residues 1–64 (MIKAIEGVVT…EDANLLYGFL (64 aa)) is domain I. Residues 65 to 134 (DANEQKMFEM…IAELSDTKLI (70 aa)) form a domain II region. The segment at 134–137 (ISDE) is flexible linker. A domain III region spans residues 138–184 (SVPSYQNEALLALEALGFKREKIVKILPDCKSENTSDLIKEALKKLG).

The protein belongs to the RuvA family. Homotetramer. Forms an RuvA(8)-RuvB(12)-Holliday junction (HJ) complex. HJ DNA is sandwiched between 2 RuvA tetramers; dsDNA enters through RuvA and exits via RuvB. An RuvB hexamer assembles on each DNA strand where it exits the tetramer. Each RuvB hexamer is contacted by two RuvA subunits (via domain III) on 2 adjacent RuvB subunits; this complex drives branch migration. In the full resolvosome a probable DNA-RuvA(4)-RuvB(12)-RuvC(2) complex forms which resolves the HJ.

It localises to the cytoplasm. The RuvA-RuvB-RuvC complex processes Holliday junction (HJ) DNA during genetic recombination and DNA repair, while the RuvA-RuvB complex plays an important role in the rescue of blocked DNA replication forks via replication fork reversal (RFR). RuvA specifically binds to HJ cruciform DNA, conferring on it an open structure. The RuvB hexamer acts as an ATP-dependent pump, pulling dsDNA into and through the RuvAB complex. HJ branch migration allows RuvC to scan DNA until it finds its consensus sequence, where it cleaves and resolves the cruciform DNA. The protein is Holliday junction branch migration complex subunit RuvA of Campylobacter concisus (strain 13826).